Consider the following 184-residue polypeptide: Casparian strip membrane protein 3 (184 aa).

Residues 1–24 (MEGSEEHGETSKAPLSRGVSKGVS) lie on the Cytoplasmic side of the membrane. The chain crosses the membrane as a helical span at residues 25–45 (ILDVILRFVAIIGTLASAIAM). The Extracellular segment spans residues 46 to 72 (GTTNQTLPFFTQFIRFKAQYSDLPTLT). N-linked (GlcNAc...) asparagine glycosylation occurs at Asn49. Residues 73–93 (FFVVANSIVSAYLILSLPLSI) traverse the membrane as a helical segment. At 94-105 (VHVIRSRAKYSR) the chain is on the cytoplasmic side. A helical membrane pass occupies residues 106–126 (LILIFFDAAMLALVTAGASAA). Over 127–159 (AAIVYLAHKGNARANWLAICQQFDSFCERISGS) the chain is Extracellular. A helical membrane pass occupies residues 160 to 180 (LIGSFAAMVVLVLLIFLSAIA). Over 181 to 184 (LARR) the chain is Cytoplasmic.

The protein belongs to the Casparian strip membrane proteins (CASP) family. In terms of assembly, homodimer and heterodimers.

The protein resides in the cell membrane. Regulates membrane-cell wall junctions and localized cell wall deposition. Required for establishment of the Casparian strip membrane domain (CSD) and the subsequent formation of Casparian strips, a cell wall modification of the root endodermis that determines an apoplastic barrier between the intraorganismal apoplasm and the extraorganismal apoplasm and prevents lateral diffusion. The protein is Casparian strip membrane protein 3 of Oryza sativa subsp. indica (Rice).